The chain runs to 553 residues: Solute carrier family 45 member 3 (553 aa).

The next 11 membrane-spanning stretches (helical) occupy residues 19–39 (LLIN…ITYV), 52–72 (FMTM…PLLG), 88–108 (FIWA…RAGW), 120–140 (LELA…QVCF), 161–181 (YSVY…LPAI), 198–218 (CLFG…LLVA), 275–295 (FVAE…YTDF), 323–343 (MGSL…LVMD), 353–373 (AVYL…CLSH), 382–402 (AALT…LASL), and 522–542 (AYMV…TQVV).

This sequence belongs to the glycoside-pentoside-hexuronide (GPH) cation symporter transporter (TC 2.A.2) family.

It localises to the membrane. It catalyses the reaction sucrose(out) + H(+)(out) = sucrose(in) + H(+)(in). Its function is as follows. Proton-associated sucrose transporter. May be able to transport also glucose and fructose. The sequence is that of Solute carrier family 45 member 3 (SLC45A3) from Macaca fascicularis (Crab-eating macaque).